Reading from the N-terminus, the 55-residue chain is Large ribosomal subunit protein bL33 (55 aa).

Belongs to the bacterial ribosomal protein bL33 family.

This Hamiltonella defensa subsp. Acyrthosiphon pisum (strain 5AT) protein is Large ribosomal subunit protein bL33.